Reading from the N-terminus, the 792-residue chain is MEDDGGERSSFVAGLIENRAKEVGMAAFDLRSASLHLSQYIETSSSYQNTKTLLRFYDPSVIIVPPNKLAADGMVGVSELVDRCYSTVRKVVFARGCFDDTKGAVLIQNLAAEEPLALGLDTYYKQHYLSLAAAAATIKWIEAEKGVIVTNHSLTVTFNGSFDHMNIDATSVENLELIDPFHNALLGTSNKKRSLFQMFKTTKTAGGTRLLRANLLQPLKDIETINTRLDCLDELMSNEQLFFGLSQVLRKFPKETDRVLCHFCFKPKKVTEAVIGFENTRKSQNMISSIILLKTALDALPILAKVLKDAKCFLLANVYKSVCENDRYASIRKKIGEVIDDDVLHARVPFVARTQQCFALKAGIDGFLDIARRTFCDTSEAIHNLASKYREEFNLPNLKLPFNNRQGFFFRIPQKEVQGKLPNKFTQVVKHGKNIHCSSLELASLNVRNKSAAGECFIRTETCLEALMDAIREDISALTLLAEVLCLLDMIVNSFAHTISTKPVDRYSRPELTDSGPLAIDAGRHPILESIHNDFVSNSIFMSEATNMLVVMGPNMSGKSTYLQQVCLVVILAQIGCYVPARFATIRVVDRIFTRMGTMDNLESNSSTFMTEMRETAFIMQNVTNRSLIVMDELGRATSSSDGLAMAWSCCEYLLSLKAYTVFATHMDSLAELATIYPNVKVLHFYVDIRDNRLDFKFQLRDGTLHVPHYGLLLAEVAGLPSTVIDTARIITKRITDKENKRIELNCGKHHEIHRIYRVAQRLICLKYSRQTEDSIRQALQNLNESFTEERL.

Position 553–560 (553–560) interacts with ATP; that stretch reads GPNMSGKS.

It belongs to the DNA mismatch repair MutS family. As to expression, specifically expressed in flowers.

The protein resides in the nucleus. In terms of biological role, involved in meiotic recombination in association with MSH5. Required for reciprocal recombination and proper segregation of homologous chromosomes at meiosis. Promotes homologous recombination through facilitating chiasma formation during prophase I. Involved in the control of class I crossovers formation. The sequence is that of DNA mismatch repair protein MSH4 (MSH4) from Arabidopsis thaliana (Mouse-ear cress).